The primary structure comprises 644 residues: MVEGWRNGFRDATNSKPLFVTIYATVIIGVLVSSFYVFSAIYSPTNGSSSFLSFPPLSTSGRIHSLPQENATLELPVAPPPPPQALPPPVLEEAQGNSLGKIWVSPPRDKKMPPLETFKLTKELFGERVKDNVIIVTFGNYAFMDFILTWVKHLTDLDLSNILVGAMDTKLLEALYWKGVPVFDMGSHMSTVDVGWGSPTFHKMGREKVILIDSVLPFGYELLMCDTDMVWLKNPMPYLARFPDADVLTSSDQVVPTVIDDSLDIWQQVGAAYNIGIFHWRPTESAKKLAKEWKEILLADDKVWDQNGFNEIVRRQLGPSVEGDSGLFYAYDGNLKVGILPASIFCSGHTYFVQAMYQQLRLEPYAVHTTFQYAGTEGKRHRLREGMVFYDPPEYYDSPGGFIAFKPSIPKSLLLDGKHTIESHFILVNHQMKQIRSALAIASLLNRTLVMPPIWCRLDRLWFGHPGTLQGSMTRQPFICPLDHVFEVNIMLKELPEEEFGPGIGIREYSFLDNPLLPKQVKESWLDVQLCQEGKEGCEASNNTSPSRVLKFPKRSNEDTFKAIFSSFDDVKVIKFSSIEDAFIGFSDKEREERFRRRVKRYVGIWCCEENKTPGHIYYDMYWDEKPGWKPVPPQTPEEDHPPL.

Topologically, residues 1-17 are cytoplasmic; sequence MVEGWRNGFRDATNSKP. A helical; Signal-anchor for type II membrane protein transmembrane segment spans residues 18–38; that stretch reads LFVTIYATVIIGVLVSSFYVF. Residues 39-644 lie on the Lumenal side of the membrane; sequence SAIYSPTNGS…QTPEEDHPPL (606 aa). Asn-46 and Asn-70 each carry an N-linked (GlcNAc...) asparagine glycan. Residues 226-228 carry the DXD motif motif; that stretch reads DTD. N-linked (GlcNAc...) asparagine glycosylation is found at Asn-446 and Asn-542.

Belongs to the glycosyltransferase 77 family.

The protein localises to the golgi apparatus membrane. Plays a role in the arabinosylation of cell wall components. Involved in the arabinosylation of extensin proteins in root hair cells. Extensins are structural glycoproteins present in cell walls and its arabinosylation is important for cell elongation, root hair cell development, lateral root development and root hair tip growth. This is Arabinosyltransferase XEG113 from Arabidopsis thaliana (Mouse-ear cress).